Consider the following 621-residue polypeptide: uncharacterized protein (621 aa).

The protein localises to the plastid. The protein resides in the chloroplast. This is an uncharacterized protein from Porphyra purpurea (Red seaweed).